The primary structure comprises 160 residues: Cytochrome b6-f complex subunit 4 (160 aa).

Transmembrane regions (helical) follow at residues Leu36–Val56, Leu95–Glu115, and Thr131–Ile151.

The protein belongs to the cytochrome b family. PetD subfamily. The 4 large subunits of the cytochrome b6-f complex are cytochrome b6, subunit IV (17 kDa polypeptide, petD), cytochrome f and the Rieske protein, while the 4 small subunits are petG, petL, petM and petN. The complex functions as a dimer.

The protein localises to the plastid. Its subcellular location is the chloroplast thylakoid membrane. Component of the cytochrome b6-f complex, which mediates electron transfer between photosystem II (PSII) and photosystem I (PSI), cyclic electron flow around PSI, and state transitions. This is Cytochrome b6-f complex subunit 4 from Psilotum nudum (Whisk fern).